We begin with the raw amino-acid sequence, 614 residues long: Chaperone protein DnaK (614 aa).

A Phosphothreonine; by autocatalysis modification is found at Thr-175. A disordered region spans residues 577–614; that stretch reads QAGGAEGAADPNAAAGGAQSAPHDDNVVDADFKVDEDK. The span at 583–597 shows a compositional bias: low complexity; the sequence is GAADPNAAAGGAQSA. Residues 598–614 show a composition bias toward basic and acidic residues; sequence PHDDNVVDADFKVDEDK.

The protein belongs to the heat shock protein 70 family.

Functionally, acts as a chaperone. The chain is Chaperone protein DnaK from Clostridium beijerinckii (strain ATCC 51743 / NCIMB 8052) (Clostridium acetobutylicum).